The sequence spans 1009 residues: Cilia- and flagella-associated protein 70 (1009 aa).

Positions 410-428 (NLKEDKPVKEKDIDGRPRP) are enriched in basic and acidic residues. A disordered region spans residues 410-457 (NLKEDKPVKEKDIDGRPRPGDVQAPSIKSQSSDTPLEGEPPLSHNPEG). 7 TPR repeats span residues 498-531 (PPLT…EYYR), 635-668 (SEQL…EPQN), 669-702 (LDHW…NQSH), 704-736 (HSLL…EPTN), 888-921 (HFIF…SPSC), 923-954 (TWLG…NNYN), and 956-988 (EVWA…KLKD).

This sequence belongs to the CFAP70 family.

The protein localises to the cell projection. Its subcellular location is the cilium. It is found in the flagellum. The protein resides in the cytoplasm. It localises to the cytoskeleton. The protein localises to the flagellum basal body. Its subcellular location is the cilium axoneme. Its function is as follows. Axoneme-binding protein that plays a role in the regulation of ciliary motility and cilium length. The sequence is that of Cilia- and flagella-associated protein 70 from Macaca fascicularis (Crab-eating macaque).